The following is a 252-amino-acid chain: Ribosomal RNA large subunit methyltransferase E (252 aa).

Residues Gly48, Trp50, Asp68, Asp84, and Asp107 each coordinate S-adenosyl-L-methionine. Residue Lys147 is the Proton acceptor of the active site. A TRAM domain is found at 194-252 (PVREGDTLEVEIDNLGDEGDGVAKVDGYTLFVSGAEPGDAPEVRVTDVKPRFGFAETLE).

Belongs to the class I-like SAM-binding methyltransferase superfamily. RNA methyltransferase RlmE family.

The protein resides in the cytoplasm. The catalysed reaction is uridine(2552) in 23S rRNA + S-adenosyl-L-methionine = 2'-O-methyluridine(2552) in 23S rRNA + S-adenosyl-L-homocysteine + H(+). Its function is as follows. Specifically methylates the uridine in position 2552 of 23S rRNA at the 2'-O position of the ribose in the fully assembled 50S ribosomal subunit. This chain is Ribosomal RNA large subunit methyltransferase E, found in Natronomonas pharaonis (strain ATCC 35678 / DSM 2160 / CIP 103997 / JCM 8858 / NBRC 14720 / NCIMB 2260 / Gabara) (Halobacterium pharaonis).